Consider the following 253-residue polypeptide: MNRASLEKRPDEVATMFDDVAPKYDVVNDVLSMGQTRRWRRIVVDAMDVKVGQKVLDLAAGTGTSSEPYADAGVDVVACDFSLGMLKVGKRRRPDIDFIAGDATNLPFADNSFDASTISFGLRNVVEPRKALEEMLRVTKPGGRLVIAEFSHPVVPLWRNLYTEYLMRALPAIATKVSSNPDAYVYLAESIRAWPDQDHLAQWLSDAGWTDITYRNLSGGIVAVHRAQKPDEHRESVPVAKLRRQIKPRHQAG.

Residues Thr-62, Asp-80, 102–103 (DA), and Ser-119 each bind S-adenosyl-L-methionine.

This sequence belongs to the class I-like SAM-binding methyltransferase superfamily. MenG/UbiE family.

The enzyme catalyses a 2-demethylmenaquinol + S-adenosyl-L-methionine = a menaquinol + S-adenosyl-L-homocysteine + H(+). It functions in the pathway quinol/quinone metabolism; menaquinone biosynthesis; menaquinol from 1,4-dihydroxy-2-naphthoate: step 2/2. Its function is as follows. Methyltransferase required for the conversion of demethylmenaquinol (DMKH2) to menaquinol (MKH2). This chain is Demethylmenaquinone methyltransferase, found in Paenarthrobacter aurescens (strain TC1).